We begin with the raw amino-acid sequence, 459 residues long: Cysteine--tRNA ligase (459 aa).

Residue Cys-27 coordinates Zn(2+). Positions 29-39 match the 'HIGH' region motif; it reads ITVYDDCHIGH. Positions 208, 233, and 237 each coordinate Zn(2+). A 'KMSKS' region motif is present at residues 265 to 269; sequence KMSKS. Position 268 (Lys-268) interacts with ATP.

This sequence belongs to the class-I aminoacyl-tRNA synthetase family. Monomer. The cofactor is Zn(2+).

The protein resides in the cytoplasm. It carries out the reaction tRNA(Cys) + L-cysteine + ATP = L-cysteinyl-tRNA(Cys) + AMP + diphosphate. This chain is Cysteine--tRNA ligase, found in Francisella philomiragia subsp. philomiragia (strain ATCC 25017 / CCUG 19701 / FSC 153 / O#319-036).